The chain runs to 480 residues: Flotillin-like protein 2 (480 aa).

A lipid anchor (S-palmitoyl cysteine) is attached at Cys-37. Residues 237 to 257 (ENQREAEVAQANSELAKKKAA) are a coiled coil.

It belongs to the band 7/mec-2 family. Flotillin subfamily. In terms of processing, may be palmitoylated. In terms of tissue distribution, expressed in flowers in green pods. Primarily expressed in vascular tissues. Upon induction of nodulation, expansion of expression in the root cortex in the region of elongating root hairs, which will eventually become colonized by bacteria. Expressed in the infection zone in nodules.

It localises to the cell membrane. Its subcellular location is the membrane. The protein resides in the caveola. In terms of biological role, may act as a scaffolding protein within caveolar membranes, functionally participating in formation of caveolae or caveolae-like vesicles. Required for early symbiotic events and nodules formation. This Medicago truncatula (Barrel medic) protein is Flotillin-like protein 2 (FLOT2).